The chain runs to 483 residues: Macrophage receptor MARCO (483 aa).

Residues 1-48 (MGNKKALKEEAFLGSAEEGADFDQAMFPVMETFEINDPMPKKRNWGSF) lie on the Cytoplasmic side of the membrane. A helical; Signal-anchor for type II membrane protein membrane pass occupies residues 49–69 (CTAVMAIHLILLTAGTTLLTL). Residues 70 to 483 (KVLSLQKWIL…HNEDAGVECR (414 aa)) lie on the Extracellular side of the membrane. N-linked (GlcNAc...) asparagine glycosylation is found at Asn-85 and Asn-137. The disordered stretch occupies residues 146-386 (RIKGERGSPG…GEKGEKGQSF (241 aa)). Residues 148–383 (KGERGSPGIP…GQKGEKGEKG (236 aa)) enclose the Collagen-like domain. A compositionally biased stretch (low complexity) spans 153 to 166 (SPGIPGLQGPPGIK). Positions 193–216 (KGSKGDKGLIGPKGEHGTKGDKGD) are enriched in basic and acidic residues. Low complexity predominate over residues 273 to 286 (VPGTPGAAGPSGAK). Basic and acidic residues predominate over residues 376–386 (KGEKGEKGQSF). Residues 389–483 (VRIVGGTNRG…HNEDAGVECR (95 aa)) form the SRCR domain. Intrachain disulfides connect Cys-412/Cys-472, Cys-425/Cys-482, and Cys-452/Cys-462.

As to quaternary structure, homotrimer; disulfide-linked. Trimers may assemble in larger oligomers thus resulting in the creation of a large surface capable of interacting with very large ligands. In terms of processing, N-glycosylated. In terms of tissue distribution, expressed in alveolar macrophages, macrophages of lymph node sinues, and Kupffer cells in liver (at protein level).

The protein localises to the cell membrane. Functionally, pattern recognition receptor (PRR) which binds Gram-positive and Gram-negative bacteria. Also plays a role in binding of unopsonized particles by alveolar macrophages. Binds to the secretoglobin SCGB3A2. The protein is Macrophage receptor MARCO (MARCO) of Mesocricetus auratus (Golden hamster).